The following is a 335-amino-acid chain: Tryptophan--tRNA ligase (335 aa).

Residues 9 to 11 (QST) and 17 to 18 (GN) each bind ATP. Residues 10–18 (STNSLTLGN) carry the 'HIGH' region motif. Aspartate 137 contributes to the L-tryptophan binding site. Residues 149 to 151 (GKD), isoleucine 189, and 198 to 202 (KMSKS) each bind ATP. A 'KMSKS' region motif is present at residues 198-202 (KMSKS).

Belongs to the class-I aminoacyl-tRNA synthetase family. As to quaternary structure, homodimer.

The protein resides in the cytoplasm. The catalysed reaction is tRNA(Trp) + L-tryptophan + ATP = L-tryptophyl-tRNA(Trp) + AMP + diphosphate + H(+). Catalyzes the attachment of tryptophan to tRNA(Trp). The protein is Tryptophan--tRNA ligase of Malacoplasma penetrans (strain HF-2) (Mycoplasma penetrans).